The sequence spans 940 residues: UvrABC system protein A (940 aa).

32–39 (GLSGSGKS) contacts ATP. A C4-type zinc finger spans residues 252–279 (CIDCGISIDEISPRLFSFNSPFGKCDYC). ABC transporter domains are found at residues 309 to 589 (WANT…EGSL) and 609 to 937 (SNGK…HYLK). 641 to 648 (GVSGSGKS) serves as a coordination point for ATP. The segment at 740-766 (CEACKGDGIIKIEMQFLSDVYVPCEIC) adopts a C4-type zinc-finger fold.

Belongs to the ABC transporter superfamily. UvrA family. Forms a heterotetramer with UvrB during the search for lesions.

The protein resides in the cytoplasm. Functionally, the UvrABC repair system catalyzes the recognition and processing of DNA lesions. UvrA is an ATPase and a DNA-binding protein. A damage recognition complex composed of 2 UvrA and 2 UvrB subunits scans DNA for abnormalities. When the presence of a lesion has been verified by UvrB, the UvrA molecules dissociate. This chain is UvrABC system protein A, found in Clostridium tetani (strain Massachusetts / E88).